The primary structure comprises 994 residues: Alanine--tRNA ligase, chloroplastic/mitochondrial (994 aa).

A disordered region spans residues 1 to 29 (MGGLKLPPQTLHGIHGGRRPLTAPSSKPS). The Zn(2+) site is built by His672, His676, Cys774, and His778.

This sequence belongs to the class-II aminoacyl-tRNA synthetase family. In terms of assembly, monomer. It depends on Zn(2+) as a cofactor.

The protein localises to the plastid. Its subcellular location is the chloroplast. The protein resides in the mitochondrion. The catalysed reaction is tRNA(Ala) + L-alanine + ATP = L-alanyl-tRNA(Ala) + AMP + diphosphate. Its function is as follows. Catalyzes the attachment of alanine to tRNA(Ala) in a two-step reaction: alanine is first activated by ATP to form Ala-AMP and then transferred to the acceptor end of tRNA(Ala). Also edits incorrectly charged tRNA(Ala) via its editing domain. This chain is Alanine--tRNA ligase, chloroplastic/mitochondrial, found in Populus trichocarpa (Western balsam poplar).